Reading from the N-terminus, the 508-residue chain is Protein FAM217A (508 aa).

The protein belongs to the FAM217 family.

This Homo sapiens (Human) protein is Protein FAM217A (FAM217A).